We begin with the raw amino-acid sequence, 342 residues long: N-acetyl-gamma-glutamyl-phosphate reductase (342 aa).

Residue C147 is part of the active site.

The protein belongs to the NAGSA dehydrogenase family. Type 1 subfamily.

It localises to the cytoplasm. It catalyses the reaction N-acetyl-L-glutamate 5-semialdehyde + phosphate + NADP(+) = N-acetyl-L-glutamyl 5-phosphate + NADPH + H(+). It functions in the pathway amino-acid biosynthesis; L-arginine biosynthesis; N(2)-acetyl-L-ornithine from L-glutamate: step 3/4. Functionally, catalyzes the NADPH-dependent reduction of N-acetyl-5-glutamyl phosphate to yield N-acetyl-L-glutamate 5-semialdehyde. The sequence is that of N-acetyl-gamma-glutamyl-phosphate reductase from Campylobacter jejuni subsp. jejuni serotype O:23/36 (strain 81-176).